The following is a 122-amino-acid chain: MIQTQSMLDVADNSGARRVMCIKVLGGSHRRYAGIGDIIKVTVKEAIPRGKVKKGQVMTAVVVRTRHGVRRADGSIIRFDGNAAVLLNNKQEPIGTRIFGPVTRELRNEKFMKIVSLAPEVL.

Belongs to the universal ribosomal protein uL14 family. Part of the 50S ribosomal subunit. Forms a cluster with proteins L3 and L19. In the 70S ribosome, L14 and L19 interact and together make contacts with the 16S rRNA in bridges B5 and B8.

Functionally, binds to 23S rRNA. Forms part of two intersubunit bridges in the 70S ribosome. This is Large ribosomal subunit protein uL14 from Pseudomonas fluorescens (strain ATCC BAA-477 / NRRL B-23932 / Pf-5).